Reading from the N-terminus, the 129-residue chain is Small ribosomal subunit protein uS11 (129 aa).

In terms of assembly, part of the 30S ribosomal subunit. Interacts with proteins S7 and S18. Binds to IF-3. Post-translationally, may be methylated on an undetermined residue.

Its function is as follows. Located on the platform of the 30S subunit, it bridges several disparate RNA helices of the 16S rRNA. Forms part of the Shine-Dalgarno cleft in the 70S ribosome. The polypeptide is Small ribosomal subunit protein uS11 (Rhodopseudomonas palustris (strain ATCC BAA-98 / CGA009)).